Reading from the N-terminus, the 536-residue chain is Signal peptide peptidase-like 5 (536 aa).

An N-terminal signal peptide occupies residues 1-29 (MSLPPFTCRLLAAAAALYLIGLLCVGADT). At 30-186 (KDVTAPKIPG…VELLLYAPKS (157 aa)) the chain is on the lumenal side. A PA domain is found at 94-170 (SNLTSKLSWS…TSSGDALKKS (77 aa)). N-linked (GlcNAc...) asparagine glycosylation is found at Asn-95 and Asn-151. A helical transmembrane segment spans residues 187-207 (PIVDYAVVFLWLMSVGTVFVA). Over 208-243 (SVWSHVTSPKKNDEQYDELSPKKSSNVDATKGGAEE) the chain is Cytoplasmic. The tract at residues 218–238 (KNDEQYDELSPKKSSNVDATK) is disordered. The chain crosses the membrane as a helical span at residues 244-264 (ETLDISAMGAVIFVISASTFL). The Lumenal portion of the chain corresponds to 265–273 (VLLFFFMSS). Residues 274 to 296 (WFILILTIFFVIGGMQGMHNINV) form a helical membrane-spanning segment. The Cytoplasmic portion of the chain corresponds to 297–318 (TLITRRCSKCGQKNLKLPLLGN). The helical transmembrane segment at 319 to 339 (TSILSLVVLLFCFVVAILWFM) threads the bilayer. Residues 340–344 (NRKTS) are Lumenal-facing. Residues 345–365 (HAWAGQDIFGICMMINVLQVA) form a helical membrane-spanning segment. Over 366–374 (RLPNIRVAT) the chain is Cytoplasmic. A helical transmembrane segment spans residues 375–395 (ILLCCAFFYDIFWVFISPLIF). Asp-384 is an active-site residue. Topologically, residues 396 to 428 (KQSVMIAVARGSKDTGESIPMLLRIPRLSDPWG) are lumenal. A helical transmembrane segment spans residues 429–449 (GYNMIGFGDILFPGLLICFIF). The active site involves Asp-437. Residues 450–463 (RFDKENNKGVSNGY) lie on the Cytoplasmic side of the membrane. The chain crosses the membrane as a helical span at residues 464 to 484 (FPWLMFGYGLGLFLTYLGLYV). Residues 485–489 (MNGHG) lie on the Lumenal side of the membrane. The chain crosses the membrane as a helical span at residues 490–510 (QPALLYLVPCTLGITVILGLV). The short motif at 491-493 (PAL) is the PAL element. Topologically, residues 511-536 (RKELRDLWNYGTQQPSAADVNPSPEA) are cytoplasmic.

The protein belongs to the peptidase A22B family. In terms of processing, glycosylated.

Its subcellular location is the endosome membrane. Functionally, intramembrane-cleaving aspartic protease (I-CLiP) that cleaves type II membrane signal peptides in the hydrophobic plane of the membrane. This Arabidopsis thaliana (Mouse-ear cress) protein is Signal peptide peptidase-like 5 (SPPL5).